A 393-amino-acid polypeptide reads, in one-letter code: S-adenosylmethionine synthase 2 (393 aa).

Glutamate 9 contacts Mg(2+). Histidine 15 is an ATP binding site. A K(+)-binding site is contributed by glutamate 43. L-methionine contacts are provided by glutamate 56 and glutamine 99. ATP-binding positions include 167 to 169 (DGK), 235 to 238 (SGRF), aspartate 246, 252 to 253 (RK), alanine 269, lysine 273, and lysine 277. Aspartate 246 serves as a coordination point for L-methionine. Lysine 277 lines the L-methionine pocket.

This sequence belongs to the AdoMet synthase family. Homotetramer. Mn(2+) is required as a cofactor. Requires Mg(2+) as cofactor. The cofactor is Co(2+). It depends on K(+) as a cofactor. In terms of tissue distribution, mostly expressed in roots. Also present in stems and leaves.

It localises to the cytoplasm. The catalysed reaction is L-methionine + ATP + H2O = S-adenosyl-L-methionine + phosphate + diphosphate. Its pathway is amino-acid biosynthesis; S-adenosyl-L-methionine biosynthesis; S-adenosyl-L-methionine from L-methionine: step 1/1. Catalyzes the formation of S-adenosylmethionine from methionine and ATP. The reaction comprises two steps that are both catalyzed by the same enzyme: formation of S-adenosylmethionine (AdoMet) and triphosphate, and subsequent hydrolysis of the triphosphate. This Solanum lycopersicum (Tomato) protein is S-adenosylmethionine synthase 2 (SAM2).